Consider the following 566-residue polypeptide: Putative ABC transporter ATP-binding protein BT9727_2424 (566 aa).

ABC transporter domains follow at residues 5-246 (ISFE…GLRE) and 300-533 (LKVE…ANLK). Residues 39 to 46 (GRSGSGKS) and 333 to 340 (GHNGAGKS) contribute to the ATP site.

The protein belongs to the ABC transporter superfamily.

The protein resides in the cell membrane. Functionally, probably part of an ABC transporter complex. Responsible for energy coupling to the transport system. This chain is Putative ABC transporter ATP-binding protein BT9727_2424, found in Bacillus thuringiensis subsp. konkukian (strain 97-27).